The primary structure comprises 300 residues: Cyclic nucleotide synthase CdnE01 (300 aa).

The Mg(2+) site is built by D63, D65, and D137.

The protein belongs to the CD-NTase family. E01 subfamily. Requires Mg(2+) as cofactor.

Binds to and probably activated by a virus-derived, approximately 400 nucleotide RNA (called CBASS-activating bacteriophage RNA, cabRNA) that begins in the viral terminase subunit terS and extends into terL, as well as by a shorter RNA with part of the cabRNA sequence able to form a hairpin. RNA secondary and/or tertiary structure, as well as viral infection itself, are important for CdnE activation. In terms of biological role, cyclic nucleotide synthase (second messenger synthase) of a CBASS antivirus system. CBASS (cyclic oligonucleotide-based antiphage signaling system) provides immunity against bacteriophage. The CD-NTase protein synthesizes cyclic nucleotides in response to infection; these serve as specific second messenger signals. The signals activate a diverse range of effectors, leading to bacterial cell death and thus abortive phage infection. A type I-B CBASS system. Its function is as follows. Protects S.aureus against phage infection. When the CBASS operon (cdnE and the following gene) is introduced in S.aureus strain RN4220 there is strong protection against lytic DNA phages 80alpha-vir and phi-NM1-gamma-6 but little to no protection against phages phi-NM4-gamma-4 or phi-12-gamma-3. This chain is Cyclic nucleotide synthase CdnE01, found in Staphylococcus haemolyticus.